Reading from the N-terminus, the 1609-residue chain is Factor-induced gene 2 protein (1609 aa).

An N-terminal signal peptide occupies residues 1–22; the sequence is MNSFASLGLIYSVVNLLTRVEA. A glycan (N-linked (GlcNAc...) asparagine) is linked at asparagine 29. 3 disordered regions span residues 129–165, 196–243, and 266–312; these read SSTLSSTAQPHRTSHSSSSFELPVTAPSSSSLPSSTS, SSEI…EPLS, and TIPT…NYDV. The segment covering 137 to 148 has biased composition (polar residues); sequence QPHRTSHSSSSF. A compositionally biased stretch (low complexity) spans 150–165; sequence LPVTAPSSSSLPSSTS. A compositionally biased stretch (polar residues) spans 196–212; that stretch reads SSEISGSTSPKSLESFD. 2 stretches are compositionally biased toward low complexity: residues 213–243 and 274–285; these read TTGTITSSYSPSPSSKNSNQTSLLSPLEPLS and TSSLPPTLRSSS. An N-linked (GlcNAc...) asparagine glycan is attached at asparagine 231. The segment covering 286–312 has biased composition (polar residues); the sequence is MAPTSGSDSISHNFTSPPSKTSGNYDV. Residues asparagine 298, asparagine 347, asparagine 386, asparagine 426, asparagine 495, asparagine 535, asparagine 661, asparagine 674, and asparagine 713 are each glycosylated (N-linked (GlcNAc...) asparagine). The interval 846-876 is disordered; sequence ATSEATSTSTQVSATSATATASESSTTSQVS. Asparagine 889, asparagine 907, and asparagine 1079 each carry an N-linked (GlcNAc...) asparagine glycan. A compositionally biased stretch (polar residues) spans 1231-1243; that stretch reads CTQDVPTQSSSPA. The disordered stretch occupies residues 1231-1259; the sequence is CTQDVPTQSSSPASTLAYSPSVSTSSSSS. The span at 1244 to 1259 shows a compositional bias: low complexity; the sequence is STLAYSPSVSTSSSSS. Asparagine 1400 carries N-linked (GlcNAc...) asparagine glycosylation. A lipid anchor (GPI-anchor amidated glycine) is attached at glycine 1588. The propeptide at 1589 to 1609 is removed in mature form; the sequence is SASKFLCSKFFMIMVMVINFI.

Post-translationally, N-glycosylated.

Its subcellular location is the secreted. The protein localises to the cell wall. It is found in the membrane. Its function is as follows. Required for efficient mating. Plays a role in maintenance of cell wall integrity during mating. Important for mating cell projection shape and conjugation bridge diameter. Plays a role in cell fusion and nuclear migration. In Saccharomyces cerevisiae (strain ATCC 204508 / S288c) (Baker's yeast), this protein is Factor-induced gene 2 protein (FIG2).